The chain runs to 580 residues: MPEFRVWAPKPALVRLDVNGAVHAMTRSADGWWHTTVAAPADARYGYLLDDDPTVLPDPRSARQPDGVHARSQRWEPPGQFGAARTDTGWPGRSVEGAVIYELHIGTFTTAGTFDAAIEKLDYLVDLGIDFVELMPVNSFAGTRGWGYDGVLWYSVHEPYGGPDGLVRFIDACHARRLGVLIDAVFNHLGPSGNYLPRFGPYLSSASNPWGDGINIAGADSDEVRHYIIDCALRWMRDFHADGLRLDAVHALVDTTAVHVLEELANATRWLSGQLGRPLSLIAETDRNDPRLITRPSHGGYGITAQWNDDIHHAIHTAVSGERQGYYADFGSLATLAYTLRNGYFHAGTYSSFRRRRHGRALDTSAIPATRLLAYTCTHDQVGNRALGDRPSQYLTGGQLAIKAALTLGSPYTAMLFMGEEWGASSPFQFFCSHPEPELAHSTVAGRKEEFAEHGWAADDIPDPQDPQTFQRCKLNWAEAGSGEHARLHRFYRDLIALRHNEADLADPWLDHLMVDYDEQQRWVVMRRGQLMIACNLGAEPTCVPVSGELVLAWESPIIGDNSTELAAYSLAILRAAEPA.

A disordered region spans residues Leu-56–Thr-88. Residues Arg-60–His-69 are compositionally biased toward basic and acidic residues. Arg-245–His-250 lines the substrate pocket. Asp-247 acts as the Nucleophile in catalysis. The Proton donor role is filled by Glu-284. Substrate contacts are provided by residues Asp-309–His-313 and His-379–Asn-384.

Belongs to the glycosyl hydrolase 13 family.

Its subcellular location is the cytoplasm. The enzyme catalyses hydrolysis of (1-&gt;4)-alpha-D-glucosidic linkage in 4-alpha-D-[(1-&gt;4)-alpha-D-glucanosyl]n trehalose to yield trehalose and (1-&gt;4)-alpha-D-glucan.. It functions in the pathway glycan biosynthesis; trehalose biosynthesis. In terms of biological role, is involved in the biosynthesis of trehalose but not in that of capsular glucan and glycogen. In Mycobacterium tuberculosis (strain CDC 1551 / Oshkosh), this protein is Malto-oligosyltrehalose trehalohydrolase (treZ).